We begin with the raw amino-acid sequence, 833 residues long: Transmembrane protease serine 7 (833 aa).

Residues 1-62 (MDKEKSDPSC…RAPFWNVQNK (62 aa)) lie on the Cytoplasmic side of the membrane. A disordered region spans residues 30–49 (KLPGRRLPRKPIGKARPRKQ). The span at 32 to 49 (PGRRLPRKPIGKARPRKQ) shows a compositional bias: basic residues. A helical; Signal-anchor for type II membrane protein transmembrane segment spans residues 63-83 (IILFTVFLFILAVTAWTLLWL). Residues 84 to 829 (YISKTDSKDA…NFVPWIHKYV (746 aa)) are Extracellular-facing. The SEA domain occupies 92–220 (DAFYFVGMFR…DSVVLNAGLR (129 aa)). The N-linked (GlcNAc...) asparagine glycan is linked to asparagine 196. Cystine bridges form between cysteine 233–cysteine 259, cysteine 285–cysteine 312, and cysteine 355–cysteine 386. CUB domains lie at 233-350 (CSQY…FEVI) and 355-471 (CENT…YNIS). 2 N-linked (GlcNAc...) asparagine glycosylation sites follow: asparagine 405 and asparagine 469. LDL-receptor class A domains are found at residues 473-509 (PCPA…LFCV) and 548-585 (PCTN…EGCG). 7 disulfide bridges follow: cysteine 474-cysteine 486, cysteine 481-cysteine 499, cysteine 493-cysteine 508, cysteine 549-cysteine 561, cysteine 556-cysteine 575, cysteine 569-cysteine 584, and cysteine 621-cysteine 637. One can recognise a Peptidase S1 domain in the interval 596–830 (VVGGSDSQEG…FVPWIHKYVP (235 aa)). Residues histidine 636 and aspartate 684 each act as charge relay system in the active site. 3 cysteine pairs are disulfide-bonded: cysteine 720–cysteine 786, cysteine 752–cysteine 765, and cysteine 776–cysteine 806. Serine 780 serves as the catalytic Charge relay system.

Belongs to the peptidase S1 family. Forms a heterodimer with SERPINA5. N-glycosylated.

Its subcellular location is the cell membrane. In terms of biological role, serine protease which preferentially hydrolyzes peptides with Arg at the P1 position. The polypeptide is Transmembrane protease serine 7 (Rattus norvegicus (Rat)).